The sequence spans 185 residues: Large ribosomal subunit protein uL5 (185 aa).

The protein belongs to the universal ribosomal protein uL5 family. Part of the 50S ribosomal subunit; part of the 5S rRNA/L5/L18/L25 subcomplex. Contacts the 5S rRNA and the P site tRNA. Forms a bridge to the 30S subunit in the 70S ribosome.

In terms of biological role, this is one of the proteins that bind and probably mediate the attachment of the 5S RNA into the large ribosomal subunit, where it forms part of the central protuberance. In the 70S ribosome it contacts protein S13 of the 30S subunit (bridge B1b), connecting the 2 subunits; this bridge is implicated in subunit movement. Contacts the P site tRNA; the 5S rRNA and some of its associated proteins might help stabilize positioning of ribosome-bound tRNAs. The chain is Large ribosomal subunit protein uL5 from Chelativorans sp. (strain BNC1).